We begin with the raw amino-acid sequence, 1771 residues long: Myosin-H heavy chain (1771 aa).

One can recognise a Myosin N-terminal SH3-like domain in the interval cysteine 7–proline 57. Residues glutamate 61 to serine 840 enclose the Myosin motor domain. Position 154-161 (glycine 154–threonine 161) interacts with ATP. Residues leucine 690–threonine 712 form an actin-binding region. 3 consecutive IQ domains span residues methionine 843–tyrosine 872, threonine 866–alanine 895, and arginine 940–serine 969. 3 disordered regions span residues glutamate 1070 to aspartate 1176, valine 1218 to methionine 1282, and leucine 1312 to glutamine 1343. Residues tyrosine 1077 to arginine 1111 show a composition bias toward polar residues. The span at asparagine 1112 to serine 1139 shows a compositional bias: low complexity. A compositionally biased stretch (basic and acidic residues) spans histidine 1143 to glutamate 1153. Residues arginine 1180–histidine 1224 are a coiled coil. Residues asparagine 1253–asparagine 1281 are compositionally biased toward low complexity. Positions threonine 1427–tyrosine 1695 constitute a Dilute domain.

Belongs to the TRAFAC class myosin-kinesin ATPase superfamily. Myosin family. As to quaternary structure, myosin I heavy chain is single-headed. Dimer of a heavy and a light chain. Inability to self-assemble into filaments.

Myosin is a protein that binds to actin and has ATPase activity that is activated by actin. This Dictyostelium discoideum (Social amoeba) protein is Myosin-H heavy chain (myoH).